The following is a 429-amino-acid chain: Enolase (429 aa).

Q165 provides a ligand contact to (2R)-2-phosphoglycerate. The Proton donor role is filled by E207. D244, E287, and D314 together coordinate Mg(2+). (2R)-2-phosphoglycerate-binding residues include K339, R368, S369, and K390. The active-site Proton acceptor is K339.

This sequence belongs to the enolase family. Mg(2+) serves as cofactor.

The protein resides in the cytoplasm. Its subcellular location is the secreted. The protein localises to the cell surface. It carries out the reaction (2R)-2-phosphoglycerate = phosphoenolpyruvate + H2O. It functions in the pathway carbohydrate degradation; glycolysis; pyruvate from D-glyceraldehyde 3-phosphate: step 4/5. Functionally, catalyzes the reversible conversion of 2-phosphoglycerate (2-PG) into phosphoenolpyruvate (PEP). It is essential for the degradation of carbohydrates via glycolysis. In Roseiflexus sp. (strain RS-1), this protein is Enolase.